Here is a 1152-residue protein sequence, read N- to C-terminus: MSHIDGDDHMTKDLIDSLESKDNDLSLVTSNTQIPDVEVANLTHDADEINQLFDTATNNVLPESNKKDKPIDTQDLHEDDPKAVPKTTSNGESTSNSNSVSPKLLPNDGKSTPKIQKELRRKSTFVPVTSNSKSLEPSEDDNNNNNNNSRISAYARLDFENFTFFVQTLQVVLGRKSNDETLQQNVDVHLSSKKAISRRHAKIFYNFGTQRFEISILGRNGAFVDNVFVEKGLTIPLTDGNKIQIGDIPFKFVLPSNEPNEENNNQDSSEKQFNPSDAINLRSNLYSKSSSPQSSPKRKPQPSKKVKKEPVSASNTSKDIKPTPPVPTTAISPTASISTSTNAATAATATTPATTTAARKNSINRRNSLLKIRRLSNARRKSLAANDEINELLKDLGVTSIDEINEEDSELLDAQIQSLLDEDNENLGGIEDSLMKLAEFNESAIDDDDDDEEGNENSQADLDRLEKTMEHDAIDDEIKAIDSNLTLLDDEISKLTPLINDTNQGLLEEKETKKKQLEEEKRKKQLQQLQHKNSLAKFPRRSAPLMGKPASIQPPASSSIYSRINGLDKIGKTVSPRPPPPKLIAPVLRVTAEPSAIRSRPPLRAITVSDSSYIATFSYPKTIEEPSKYPKPKVKKEHHKKHSKKVYSLDEIPEPYRSKPNISFQIMITNVLKTEAARNGLIINEITEAIKEVYPYYKYCTDGWQFSINHCIKFTKIYKRLQKRGSEWLYAMDELYINERENIRIKQREIAKAKAKAEALRQEEIRQRQRLEAQKSLPHNIVGRNFASPYANTRVPPNQYNQFSQSSSSSSSSATTTTNGQYGSTTMVGGTSPQAGSIRAQLAAVRGNGNTPATTSTTPSLPAMNDPKTKKSLEYLQKELFTLYKARKLTYDTQTATSLITKAVATTIAQVNSIGAKAGAGDNALVFLVERAPEKVSKILDIALTKSIKEHEGIASKSPSQPATPGMRPEQLTTTSQSAATPTTTPQISNLQSLPVKPPISTPLPQVPQQQVSGVNIPGPIATPNIGVTSGVGNLGTTSIGTPTPTQIQSPATSVIPAMQSPQKPVSTPIPTSVPVPLPVPSAPLARPPSFGKPPGAGSSLSRPKAFGKPPGAGSSLSRPPTFLSNKPSYKRELEDDEEEGEQATNKIAKTE.

The segment at 55 to 147 (TATNNVLPES…SEDDNNNNNN (93 aa)) is disordered. Residues 64–83 (SNKKDKPIDTQDLHEDDPKA) are compositionally biased toward basic and acidic residues. Residues 87–101 (TTSNGESTSNSNSVS) show a composition bias toward low complexity. Polar residues predominate over residues 126-135 (VPVTSNSKSL). Positions 171–229 (VVLGRKSNDETLQQNVDVHLSSKKAISRRHAKIFYNFGTQRFEISILGRNGAFVDNVFV) constitute an FHA domain. 2 disordered regions span residues 254 to 362 (LPSN…RKNS) and 514 to 557 (KKQL…PPAS). Over residues 271-286 (KQFNPSDAINLRSNLY) the composition is skewed to polar residues. The segment covering 296 to 307 (PKRKPQPSKKVK) has biased composition (basic residues). A compositionally biased stretch (low complexity) spans 328-358 (TTAISPTASISTSTNAATAATATTPATTTAA). Coiled coils occupy residues 449–537 (DDDE…SLAK) and 734–777 (ELYI…QKSL). Residues 659 to 756 (KPNISFQIMI…QREIAKAKAK (98 aa)) constitute a DNA-binding region (fork-head). Disordered regions lie at residues 787–833 (ASPY…GTSP), 846–867 (RGNG…MNDP), 951–1010 (HEGI…VPQQ), and 1057–1152 (PAMQ…AKTE). Composition is skewed to low complexity over residues 804-826 (SQSS…GSTT), 851-863 (TPAT…SLPA), and 973-987 (TTTS…TTPQ). Pro residues-rich tracts occupy residues 996 to 1006 (VKPPISTPLPQ) and 1072 to 1082 (TSVPVPLPVPS). Polar residues-rich tracts occupy residues 1115–1128 (SSLS…SNKP) and 1143–1152 (QATNKIAKTE).

In terms of assembly, interacts with IFH1 and TBF1.

It localises to the nucleus. Its function is as follows. In complex with IFH1, acts as a transcriptional regulator of rRNA and ribosomal protein genes. The FHL1-IFH1 complex is targeted to the ribosomal protein genes by the DNA-binding factor TBF1. The polypeptide is Fork-head transcriptional regulator FHL1 (FHL1) (Candida albicans (strain SC5314 / ATCC MYA-2876) (Yeast)).